The following is a 174-amino-acid chain: Gamma-crystallin D (174 aa).

Beta/gamma crystallin 'Greek key' domains follow at residues 2–40 (GKITFYEDRGFQGRHYECSSDHSNLQPYLGRCNSVRVDS) and 41–83 (GCWM…RLIP). Residues 84-87 (HAGS) form a connecting peptide region. Beta/gamma crystallin 'Greek key' domains follow at residues 88 to 128 (HRLR…NVLE) and 129 to 171 (GSWV…RRVI).

Belongs to the beta/gamma-crystallin family.

Functionally, crystallins are the dominant structural components of the vertebrate eye lens. The polypeptide is Gamma-crystallin D (CRYGD) (Bos taurus (Bovine)).